The primary structure comprises 425 residues: CinA-like protein (425 aa).

The protein belongs to the CinA family.

The sequence is that of CinA-like protein from Shewanella sp. (strain MR-4).